The primary structure comprises 78 residues: Small ribosomal subunit protein bS18c (78 aa).

It belongs to the bacterial ribosomal protein bS18 family. In terms of assembly, part of the 30S ribosomal subunit.

The protein localises to the plastid. It is found in the chloroplast. This Oltmannsiellopsis viridis (Marine flagellate) protein is Small ribosomal subunit protein bS18c.